Reading from the N-terminus, the 333-residue chain is Adenosine deaminase (333 aa).

The Zn(2+) site is built by histidine 12 and histidine 14. Positions 14, 16, and 170 each coordinate substrate. Histidine 197 lines the Zn(2+) pocket. The Proton donor role is filled by glutamate 200. Residue aspartate 278 participates in Zn(2+) binding. Residue aspartate 279 coordinates substrate.

This sequence belongs to the metallo-dependent hydrolases superfamily. Adenosine and AMP deaminases family. Adenosine deaminase subfamily. It depends on Zn(2+) as a cofactor.

It carries out the reaction adenosine + H2O + H(+) = inosine + NH4(+). It catalyses the reaction 2'-deoxyadenosine + H2O + H(+) = 2'-deoxyinosine + NH4(+). In terms of biological role, catalyzes the hydrolytic deamination of adenosine and 2-deoxyadenosine. This is Adenosine deaminase from Escherichia coli O139:H28 (strain E24377A / ETEC).